Reading from the N-terminus, the 236-residue chain is Dense granule protein 7 (236 aa).

Positions 1–26 are cleaved as a signal peptide; the sequence is MARHAIFSALCVLGLVAAALPQFATA. Residues 45–106 form a disordered region; the sequence is DGQAPVDSLR…EVHFRKRGVR (62 aa). The segment covering 70-80 has biased composition (polar residues); sequence TTSMDKASVES. The interval 147–236 is required for dimerization, interactions with liposomes and liposome tubulation; it reads AVGMGASYFA…SGEDGEDARQ (90 aa). A helical transmembrane segment spans residues 181 to 201; the sequence is VGTVLGFAALAAAAAFLGMGL. Residues 208-236 are disordered; that stretch reads FSPRKNRSRQPALEQEVPESGEDGEDARQ. The N-linked (GlcNAc...) asparagine glycan is linked to N213. The span at 223–236 shows a compositional bias: acidic residues; that stretch reads EVPESGEDGEDARQ.

Belongs to the Gra7 family. Homodimer. Can form higher order homooligomers in a lipid-stimulated manner. Component of a complex at least composed of ROP18, GRA7 and ROP2. Interacts with ROP5. Interacts with ROP18 in the absence of ROP5. Interacts with mouse IRGA6/IIGP1 in GTP-dependent manner; the interaction results in faster turnover of the GTP-activated IRGA6/IIGP1 oligomer. Interacts with mouse TRAF6 (via N-terminal RING domain); the interaction plays a role in GRA7-induced pro-inflammatory cytokine production in mouse macrophages.

Its subcellular location is the secreted. It is found in the parasitophorous vacuole lumen. The protein resides in the parasitophorous vacuole membrane. The protein localises to the cytoplasm. It localises to the host cytoplasm. Its subcellular location is the cytoplasmic vesicle. It is found in the secretory vesicle. Its function is as follows. Binds lipid bilayers, sequesters host endocytic organelles in the parasitophorous vacuole space, and causes their deformation and remodeling. Plays a role in nutrient acquisition from the host. In complex with ROP18, targets immunity-related GTPases (IRGs) to prevent IRG-mediated parasite killing by mouse cells. Important component within a kinase complex, contributing to phosphorylation of mouse IRGA6/IIGP1, an immunity-related GTPase that protects mice from infection by certain intracellular pathogens, by Toxoplasma gondii ROP5 and ROP18. Induces pro-inflammatory cytokine production in host macrophages. Activates host pro-inflammatory signaling pathways in a MyD88-dependent manner. Triggers generation of reactive oxygen species (ROS) in host cells. Activates MAPK pathway in host cells. Activates host NF-kappa-B signaling pathway by interacting with TRAF6 and modulating the 'Lys-63'-linked polyubiquitination of TRAF6. The protein is Dense granule protein 7 of Toxoplasma gondii.